The primary structure comprises 371 residues: uncharacterized protein (371 aa).

The EH domain occupies Asp-43–Pro-148. The tract at residues Ser-179–Leu-205 is disordered.

This is an uncharacterized protein from Caenorhabditis elegans.